A 350-amino-acid polypeptide reads, in one-letter code: Heat-inducible transcription repressor HrcA (350 aa).

The protein belongs to the HrcA family.

Functionally, negative regulator of class I heat shock genes (grpE-dnaK-dnaJ and groELS operons). Prevents heat-shock induction of these operons. This Ligilactobacillus salivarius (strain UCC118) (Lactobacillus salivarius) protein is Heat-inducible transcription repressor HrcA.